Reading from the N-terminus, the 314-residue chain is MKPLIIIVGPTAVGKTALGVALAQALQGEIISGDSVQVYRKLDIGSAKPTLAEQGNVPHYLLDALDPAEPFTVAQFQTLANQSIQNIQSRGKVPIVVGGTGLYIRSLIDPFQFAEHGSESIRSFWTAFLSEQGKEALHRELAKRDPLSAQRLHPNDTVRIIRALEMCQLTGKPFSEIRGNQDMNYPPLPPSLLYVGLTAPREIIYERINRRCEQMVAAGLIEETHNLIKEGYSPKLKPLQSIGYRHALLYLYGKVTLPEMMRIFQRDTRHFAKRQLTWFRRDPRVVWYDTYSGNLTNILESLIGTCSGMESRVE.

9–16 (GPTAVGKT) contacts ATP. 11–16 (TAVGKT) is a binding site for substrate. The tract at residues 34–37 (DSVQ) is interaction with substrate tRNA.

Belongs to the IPP transferase family. In terms of assembly, monomer. It depends on Mg(2+) as a cofactor.

The enzyme catalyses adenosine(37) in tRNA + dimethylallyl diphosphate = N(6)-dimethylallyladenosine(37) in tRNA + diphosphate. Its function is as follows. Catalyzes the transfer of a dimethylallyl group onto the adenine at position 37 in tRNAs that read codons beginning with uridine, leading to the formation of N6-(dimethylallyl)adenosine (i(6)A). The protein is tRNA dimethylallyltransferase of Desulfitobacterium hafniense (strain DSM 10664 / DCB-2).